We begin with the raw amino-acid sequence, 218 residues long: Zinc finger CCHC-type and RNA-binding motif-containing protein 1 (218 aa).

An RRM domain is found at 10–88 (STVYVSNLPF…RAIKASIAKD (79 aa)). The segment at 105-122 (SRCYECGDTGHLSYACPK) adopts a CCHC-type zinc-finger fold. Residues 119-218 (ACPKNMLGER…YFSDEDELSD (100 aa)) form a disordered region. A coiled-coil region spans residues 132–188 (QKKEKKKRKRLVEEEEEEVVEEEESEDEGEDPALDSLSQAIAFQQARIDEEKNKYRH). The segment covering 144–164 (EEEEEEVVEEEESEDEGEDPA) has biased composition (acidic residues). The segment covering 178 to 201 (RIDEEKNKYRHDPAEASTSEDSRR) has biased composition (basic and acidic residues).

In terms of assembly, component of the U11/U12 snRNPs that are part of the U12-type spliceosome.

The protein resides in the nucleus. This chain is Zinc finger CCHC-type and RNA-binding motif-containing protein 1 (zcrb1), found in Xenopus laevis (African clawed frog).